Here is a 110-residue protein sequence, read N- to C-terminus: DNA-binding protein Mlab_1482 (110 aa).

It belongs to the PDCD5 family.

The protein is DNA-binding protein Mlab_1482 of Methanocorpusculum labreanum (strain ATCC 43576 / DSM 4855 / Z).